The sequence spans 174 residues: Co-chaperone protein HscB homolog (174 aa).

The J domain occupies 2–74 (NYFNLFNFTP…LRRAEHLLSL (73 aa)).

This sequence belongs to the HscB family. As to quaternary structure, interacts with HscA and stimulates its ATPase activity.

In terms of biological role, co-chaperone involved in the maturation of iron-sulfur cluster-containing proteins. Seems to help targeting proteins to be folded toward HscA. The protein is Co-chaperone protein HscB homolog of Shewanella denitrificans (strain OS217 / ATCC BAA-1090 / DSM 15013).